The following is a 261-amino-acid chain: Indole-3-glycerol phosphate synthase (261 aa).

Belongs to the TrpC family.

The enzyme catalyses 1-(2-carboxyphenylamino)-1-deoxy-D-ribulose 5-phosphate + H(+) = (1S,2R)-1-C-(indol-3-yl)glycerol 3-phosphate + CO2 + H2O. It functions in the pathway amino-acid biosynthesis; L-tryptophan biosynthesis; L-tryptophan from chorismate: step 4/5. The sequence is that of Indole-3-glycerol phosphate synthase from Paraburkholderia xenovorans (strain LB400).